Reading from the N-terminus, the 187-residue chain is Peptidoglycan-recognition protein 3 (187 aa).

The first 19 residues, Met1–Ala19, serve as a signal peptide directing secretion. 2 disulfide bridges follow: Cys21–Cys144 and Cys58–Cys64. Residues Lys43–Gly170 enclose the N-acetylmuramoyl-L-alanine amidase domain. An N-linked (GlcNAc...) asparagine glycan is attached at Asn51.

Belongs to the N-acetylmuramoyl-L-alanine amidase 2 family.

The protein localises to the secreted. Its function is as follows. Peptidoglycan-recognition protein probably involved in innate immunity by binding to peptidoglycans (PGN) of bacteria and activating the prophenoloxidase (proPO) cascade immune response. Binds to 1,3-beta-D-glucan and PGN. This chain is Peptidoglycan-recognition protein 3 (PGRP-3), found in Holotrichia diomphalia (Korean black chafer).